The primary structure comprises 258 residues: Imidazole glycerol phosphate synthase subunit HisF (258 aa).

Active-site residues include aspartate 11 and aspartate 130.

Belongs to the HisA/HisF family. Heterodimer of HisH and HisF.

It is found in the cytoplasm. The enzyme catalyses 5-[(5-phospho-1-deoxy-D-ribulos-1-ylimino)methylamino]-1-(5-phospho-beta-D-ribosyl)imidazole-4-carboxamide + L-glutamine = D-erythro-1-(imidazol-4-yl)glycerol 3-phosphate + 5-amino-1-(5-phospho-beta-D-ribosyl)imidazole-4-carboxamide + L-glutamate + H(+). The protein operates within amino-acid biosynthesis; L-histidine biosynthesis; L-histidine from 5-phospho-alpha-D-ribose 1-diphosphate: step 5/9. IGPS catalyzes the conversion of PRFAR and glutamine to IGP, AICAR and glutamate. The HisF subunit catalyzes the cyclization activity that produces IGP and AICAR from PRFAR using the ammonia provided by the HisH subunit. The chain is Imidazole glycerol phosphate synthase subunit HisF from Photorhabdus laumondii subsp. laumondii (strain DSM 15139 / CIP 105565 / TT01) (Photorhabdus luminescens subsp. laumondii).